The primary structure comprises 185 residues: Methanol dehydrogenase activator (185 aa).

Belongs to the Nudix hydrolase family. Homodimer. Mg(2+) is required as a cofactor.

Functionally, involved in the activation of the NAD-dependent methanol dehydrogenase (MDH). MDH activation by Act involves hydrolytic removal of the nicotinamide mononucleotide (NMN) moiety of the NAD cofactor, changing its ping-pong type of reaction mechanism into a ternary complex reaction mechanism. It requires the presence of magnesium ions and is also able to use ADP-ribose. This Bacillus methanolicus protein is Methanol dehydrogenase activator.